The following is a 568-amino-acid chain: Dual specificity tyrosine-phosphorylation-regulated kinase 3 (568 aa).

The segment at 1 to 168 (MKWKEKLGDG…HGVIGGPNNG (168 aa)) is disordered. Over residues 77–114 (SNTVQSDGISDSEKCSPTVSQGKSSDCLNTVKSNSSSK) the composition is skewed to polar residues. The region spanning 189–502 (YEVLKIIGKG…PAQALRHPWI (314 aa)) is the Protein kinase domain. ATP-binding positions include 195-203 (IGKGSFGQV) and lysine 218. Aspartate 315 functions as the Proton acceptor in the catalytic mechanism. Serine 330 is modified (phosphoserine). A Phosphotyrosine modification is found at tyrosine 349. The short motif at 448 to 461 (RSRRGKKRGPPGSK) is the Nuclear localization signal element.

It belongs to the protein kinase superfamily. CMGC Ser/Thr protein kinase family. MNB/DYRK subfamily. Interacts with SIRT1. The cofactor is Mg(2+). Protein kinase activity is activated following autophosphorylation at Tyr-349. Autophosphorylation at Ser-330 stabilizes the protein and enhances the protein kinase activity. Post-translationally, ubiquitinated at anaphase by the anaphase-promoting complex (APC/C), leading to its degradation by the proteasome.

The protein resides in the nucleus. It localises to the cytoplasm. It is found in the nucleus speckle. The protein localises to the cytoplasmic granule. Its subcellular location is the cytoskeleton. The protein resides in the microtubule organizing center. It localises to the centrosome. It carries out the reaction L-seryl-[protein] + ATP = O-phospho-L-seryl-[protein] + ADP + H(+). It catalyses the reaction L-threonyl-[protein] + ATP = O-phospho-L-threonyl-[protein] + ADP + H(+). The catalysed reaction is L-tyrosyl-[protein] + ATP = O-phospho-L-tyrosyl-[protein] + ADP + H(+). Its activity is regulated as follows. Protein kinase activity is activated following autophosphorylation at Tyr-349. Functionally, dual-specificity protein kinase that promotes disassembly of several types of membraneless organelles during mitosis, such as stress granules, nuclear speckles and pericentriolar material. Dual-specificity tyrosine-regulated kinases (DYRKs) autophosphorylate a critical tyrosine residue in their activation loop and phosphorylate their substrate on serine and threonine residues. Acts as a central dissolvase of membraneless organelles during the G2-to-M transition, after the nuclear-envelope breakdown: acts by mediating phosphorylation of multiple serine and threonine residues in unstructured domains of proteins, such as SRRM1 and PCM1. Does not mediate disassembly of all membraneless organelles: disassembly of P-body and nucleolus is not regulated by DYRK3. Dissolution of membraneless organelles at the onset of mitosis is also required to release mitotic regulators, such as ZNF207, from liquid-unmixed organelles where they are sequestered and keep them dissolved during mitosis. Regulates mTORC1 by mediating the dissolution of stress granules: during stressful conditions, DYRK3 partitions from the cytosol to the stress granule, together with mTORC1 components, which prevents mTORC1 signaling. When stress signals are gone, the kinase activity of DYRK3 is required for the dissolution of stress granule and mTORC1 relocation to the cytosol: acts by mediating the phosphorylation of the mTORC1 inhibitor AKT1S1, allowing full reactivation of mTORC1 signaling. Also acts as a negative regulator of EPO-dependent erythropoiesis: may place an upper limit on red cell production during stress erythropoiesis. Inhibits cell death due to cytokine withdrawal in hematopoietic progenitor cells. Promotes cell survival upon genotoxic stress through phosphorylation of SIRT1: this in turn inhibits p53/TP53 activity and apoptosis. The chain is Dual specificity tyrosine-phosphorylation-regulated kinase 3 from Macaca fascicularis (Crab-eating macaque).